Reading from the N-terminus, the 214-residue chain is Ribonuclease P protein component 3 (214 aa).

It belongs to the eukaryotic/archaeal RNase P protein component 3 family. Consists of a catalytic RNA component and at least 4-5 protein subunits.

It is found in the cytoplasm. The catalysed reaction is Endonucleolytic cleavage of RNA, removing 5'-extranucleotides from tRNA precursor.. Functionally, part of ribonuclease P, a protein complex that generates mature tRNA molecules by cleaving their 5'-ends. The sequence is that of Ribonuclease P protein component 3 from Thermococcus gammatolerans (strain DSM 15229 / JCM 11827 / EJ3).